A 150-amino-acid polypeptide reads, in one-letter code: Cytochrome b5 type B (150 aa).

The propeptide occupies 1-15; the sequence is MSGSMATAEASGSDG. A disordered region spans residues 1-21; it reads MSGSMATAEASGSDGKGQEVE. Serine 23 carries the post-translational modification Phosphoserine. The Cytochrome b5 heme-binding domain occupies 24–100; sequence VTYYRMEEVA…LKQYYIGDIH (77 aa). N6-acetyllysine is present on lysine 34. Position 37 is a phosphoserine (serine 37). N6-methyllysine is present on lysine 39. Heme-binding residues include histidine 59 and histidine 83. Serine 84 is modified (phosphoserine). Residues 122–144 traverse the membrane as a helical segment; it reads CWAYWILPIIGAVLLGFLYRYYT.

The protein belongs to the cytochrome b5 family. Component of a complex composed of cytochrome b5, NADH-cytochrome b5 reductase (CYB5R3) and MTARC2.

The protein resides in the mitochondrion outer membrane. Functionally, cytochrome b5 is a membrane-bound hemoprotein functioning as an electron carrier for several membrane-bound oxygenases. This Pongo abelii (Sumatran orangutan) protein is Cytochrome b5 type B (CYB5B).